The following is a 382-amino-acid chain: Alkaline serine protease ver112 (382 aa).

Residues 1–15 (MRLSIIAAVLPLALA) form the signal peptide. A propeptide spanning residues 16 to 102 (APVAEPEIAP…IEQDAIFSIN (87 aa)) is cleaved from the precursor. The Inhibitor I9 domain occupies 56 to 99 (SKIPGIERVYENVLNGFSATLSNEELERLRRDPDVESIEQDAIF). Residues 111–382 (TWGLTRISHR…VNYLAFNGAT (272 aa)) form the Peptidase S8 domain. 2 cysteine pairs are disulfide-bonded: Cys-138–Cys-227 and Cys-282–Cys-353. Catalysis depends on charge relay system residues Asp-143, His-173, and Ser-328.

This sequence belongs to the peptidase S8 family.

Its subcellular location is the secreted. Its activity is regulated as follows. Inhibited by phenylmethylsulfonyl fluoride (PMSF). Serine protease which can degrade the nematode cuticle. The chain is Alkaline serine protease ver112 from Corniculantispora psalliotae (Lecanicillium psalliotae).